A 378-amino-acid polypeptide reads, in one-letter code: MSASDNNNSLEQKFAPLKNDRLLRALRFEPIDTTPVWMMRQAGRYLPEYKATRAEAGDFMSLCKDTARATEVTLQPLRRYDLDAAILFSDILTIPDAMGLGLYFEAGEGPKFKHPIRQQADLDRLPVLDVNDSLDYVMRAVTSIRTALNGQVPLFGFSGSPWTLATYMIEGGSSKDYRYTKGFLYSNPDFLHQLLDKLATSVIDYLDAQVVAGAQILQIFDSWGGALGHRQFIDFSHAYNKRIVAELKVRHPEIPVVLFTKGGGLWLDIQADSEADALGLDWTMPIDRARQVLTESQRQLTKHHKKLQSSKAIQGNLDPATLYGSPATIRAEVNAMLDSAYANGEKTGYVANLGHGITQWVNPDNAKVFIDAVHDYKI.

Residues 40–44, Asp-90, Tyr-167, Ser-222, and His-355 contribute to the substrate site; that span reads RQAGR.

Belongs to the uroporphyrinogen decarboxylase family. In terms of assembly, homodimer.

It is found in the cytoplasm. The enzyme catalyses uroporphyrinogen III + 4 H(+) = coproporphyrinogen III + 4 CO2. It participates in porphyrin-containing compound metabolism; protoporphyrin-IX biosynthesis; coproporphyrinogen-III from 5-aminolevulinate: step 4/4. Catalyzes the decarboxylation of four acetate groups of uroporphyrinogen-III to yield coproporphyrinogen-III. The chain is Uroporphyrinogen decarboxylase from Psychrobacter cryohalolentis (strain ATCC BAA-1226 / DSM 17306 / VKM B-2378 / K5).